The sequence spans 348 residues: dTDP-glucose 4,6-dehydratase (348 aa).

Residues 15-16, 37-40, 62-63, and 82-86 each bind NAD(+); these read FI, DKLT, DI, and YAAES. Positions 86 and 88 each coordinate substrate. An NAD(+)-binding site is contributed by Thr101. Thr125 is a binding site for substrate. Catalysis depends on Asp126, which acts as the Proton donor. Active-site proton acceptor residues include Glu127 and Tyr161. An NAD(+)-binding site is contributed by 161–165; the sequence is YSSTK. Asn190 is a binding site for substrate. Asn191 contacts NAD(+). Substrate contacts are provided by residues 200-205, 216-218, Arg225, Asn260, and 283-287; these read KFIPRQ, KLY, and DRAGH.

This sequence belongs to the NAD(P)-dependent epimerase/dehydratase family. dTDP-glucose dehydratase subfamily. As to quaternary structure, homodimer. The cofactor is NAD(+).

The enzyme catalyses dTDP-alpha-D-glucose = dTDP-4-dehydro-6-deoxy-alpha-D-glucose + H2O. Its pathway is carbohydrate biosynthesis; dTDP-L-rhamnose biosynthesis. Functionally, catalyzes the dehydration of dTDP-D-glucose to form dTDP-6-deoxy-D-xylo-4-hexulose via a three-step process involving oxidation, dehydration and reduction. The polypeptide is dTDP-glucose 4,6-dehydratase (rmlB) (Streptococcus mutans serotype c (strain ATCC 700610 / UA159)).